A 319-amino-acid chain; its full sequence is Syntaxin ufe1 (319 aa).

Residues 1–297 (MTSRTNEFFG…IKAKSRSSRT (297 aa)) lie on the Cytoplasmic side of the membrane. In terms of domain architecture, t-SNARE coiled-coil homology spans 228 to 290 (LQEFEHTMER…SGGNQQLIKA (63 aa)). A helical; Anchor for type IV membrane protein transmembrane segment spans residues 298–315 (ARLLFCIFTVMGLLLLSL). At 316 to 319 (DRIV) the chain is on the lumenal side.

The protein belongs to the syntaxin family. In terms of assembly, component of a SNARE complex consisting of ufe1, use1, sec20 and sec22 or ykt6. Interacts with sad1.

The protein resides in the endoplasmic reticulum membrane. Its function is as follows. Syntaxin required for targeting and fusion of Golgi-derived retrograde transport vesicles with the ER. This Schizosaccharomyces pombe (strain 972 / ATCC 24843) (Fission yeast) protein is Syntaxin ufe1 (ufe1).